The chain runs to 198 residues: Molybdenum cofactor guanylyltransferase (198 aa).

Residues 14 to 16, lysine 27, aspartate 73, and aspartate 103 contribute to the GTP site; that span reads LAG. Aspartate 103 is a binding site for Mg(2+).

It belongs to the MobA family. In terms of assembly, monomer. The cofactor is Mg(2+).

The protein resides in the cytoplasm. It catalyses the reaction Mo-molybdopterin + GTP + H(+) = Mo-molybdopterin guanine dinucleotide + diphosphate. In terms of biological role, transfers a GMP moiety from GTP to Mo-molybdopterin (Mo-MPT) cofactor (Moco or molybdenum cofactor) to form Mo-molybdopterin guanine dinucleotide (Mo-MGD) cofactor. The sequence is that of Molybdenum cofactor guanylyltransferase from Pseudomonas paraeruginosa (strain DSM 24068 / PA7) (Pseudomonas aeruginosa (strain PA7)).